Here is a 207-residue protein sequence, read N- to C-terminus: Coiled-coil domain-containing protein 124 homolog (207 aa).

Residues M1 to D90 form a disordered region. A coiled-coil region spans residues K5–L71. Basic and acidic residues-rich tracts occupy residues E9–A28 and N41–K65.

The protein belongs to the CCDC124 family. As to quaternary structure, associates with translationally inactive ribosomes in the nonrotated state.

The protein localises to the cytoplasm. It is found in the nucleus. In terms of biological role, ribosome-binding protein involved in ribosome hibernation by associating with translationally inactive ribosomes. Required for translational recovery after starvation from stationary phase. May facilitate rapid translation reactivation by stabilizing the recycling-competent state of inactive ribosomes. This Schizosaccharomyces pombe (strain 972 / ATCC 24843) (Fission yeast) protein is Coiled-coil domain-containing protein 124 homolog.